The following is a 210-amino-acid chain: ATP-dependent Clp protease proteolytic subunit (210 aa).

Catalysis depends on serine 106, which acts as the Nucleophile. Residue histidine 131 is part of the active site.

It belongs to the peptidase S14 family. Fourteen ClpP subunits assemble into 2 heptameric rings which stack back to back to give a disk-like structure with a central cavity, resembling the structure of eukaryotic proteasomes.

It is found in the cytoplasm. It carries out the reaction Hydrolysis of proteins to small peptides in the presence of ATP and magnesium. alpha-casein is the usual test substrate. In the absence of ATP, only oligopeptides shorter than five residues are hydrolyzed (such as succinyl-Leu-Tyr-|-NHMec, and Leu-Tyr-Leu-|-Tyr-Trp, in which cleavage of the -Tyr-|-Leu- and -Tyr-|-Trp bonds also occurs).. Cleaves peptides in various proteins in a process that requires ATP hydrolysis. Has a chymotrypsin-like activity. Plays a major role in the degradation of misfolded proteins. In Bartonella henselae (strain ATCC 49882 / DSM 28221 / CCUG 30454 / Houston 1) (Rochalimaea henselae), this protein is ATP-dependent Clp protease proteolytic subunit.